We begin with the raw amino-acid sequence, 351 residues long: MFYLLGLRLLKYITFRMAYATIFAFLLSLIVGPHIILRLKKLRADQILREDGPKRHLSEKTGIPTMGGILIFFCVFISLVFWSNILNVYFLIIVFVMFGFAFLGFIDDFLKIKKKTSDGLKARFKVYGQIIFSFISVSILYYLGGEHVSIIYFPFIKSFKMDLGVFYIPFGMFILIAASNSFNLTDGLDGLAIGLSIVITGALIIIAYITSRADFAAYLHIPNIKGSEELVIFLGALLGGSFGFLWFNAYPAKIMMGDTGSLALGAILGMTALILKSEILFSILAGVFIIETMSVIIQVIVYKKTKKRVFKMAPLHHHFEELGWSEMQVVIRFWIIGLIFAIIALSTIKIR.

10 consecutive transmembrane segments (helical) span residues 17–37, 62–82, 85–105, 130–150, 163–183, 190–210, 230–250, 254–274, 281–301, and 328–348; these read MAYA…HIIL, GIPT…LVFW, ILNV…FLGF, IIFS…HVSI, LGVF…NSFN, GLAI…AYIT, LVIF…FNAY, IMMG…TALI, FSIL…QVIV, and QVVI…LSTI.

The protein belongs to the glycosyltransferase 4 family. MraY subfamily. The cofactor is Mg(2+).

The protein resides in the cell inner membrane. The catalysed reaction is UDP-N-acetyl-alpha-D-muramoyl-L-alanyl-gamma-D-glutamyl-meso-2,6-diaminopimeloyl-D-alanyl-D-alanine + di-trans,octa-cis-undecaprenyl phosphate = di-trans,octa-cis-undecaprenyl diphospho-N-acetyl-alpha-D-muramoyl-L-alanyl-D-glutamyl-meso-2,6-diaminopimeloyl-D-alanyl-D-alanine + UMP. The protein operates within cell wall biogenesis; peptidoglycan biosynthesis. In terms of biological role, catalyzes the initial step of the lipid cycle reactions in the biosynthesis of the cell wall peptidoglycan: transfers peptidoglycan precursor phospho-MurNAc-pentapeptide from UDP-MurNAc-pentapeptide onto the lipid carrier undecaprenyl phosphate, yielding undecaprenyl-pyrophosphoryl-MurNAc-pentapeptide, known as lipid I. This Borreliella afzelii (strain PKo) (Borrelia afzelii) protein is Phospho-N-acetylmuramoyl-pentapeptide-transferase.